Here is a 122-residue protein sequence, read N- to C-terminus: Large ribosomal subunit protein bL12 (122 aa).

Belongs to the bacterial ribosomal protein bL12 family. As to quaternary structure, homodimer. Part of the ribosomal stalk of the 50S ribosomal subunit. Forms a multimeric L10(L12)X complex, where L10 forms an elongated spine to which 2 to 4 L12 dimers bind in a sequential fashion. Binds GTP-bound translation factors.

In terms of biological role, forms part of the ribosomal stalk which helps the ribosome interact with GTP-bound translation factors. Is thus essential for accurate translation. The protein is Large ribosomal subunit protein bL12 of Glaesserella parasuis serovar 5 (strain SH0165) (Haemophilus parasuis).